Here is a 499-residue protein sequence, read N- to C-terminus: Cytochrome P450 81E8 (499 aa).

The chain crosses the membrane as a helical span at residues 3 to 23 (TFYLSLIISLFFLIITLKVFF). Cysteine 436 serves as a coordination point for heme.

The protein belongs to the cytochrome P450 family. Requires heme as cofactor.

The protein resides in the membrane. Its function is as follows. Probable monooxygenases exhibiting no activity with isoflavones such as formononetin, biochanin A, pseudobaptigenin, daidzein, genistein, isoformononetin and prunetin, or with flavonoids including naringenin, liquiritigenin, apigenin, luteolin, or kaempferol. This Medicago truncatula (Barrel medic) protein is Cytochrome P450 81E8.